Here is a 307-residue protein sequence, read N- to C-terminus: Putative S-adenosyl-L-methionine-dependent methyltransferase Mflv_5023 (307 aa).

S-adenosyl-L-methionine contacts are provided by residues D133 and 162 to 163 (DL). The segment at 213–234 (SRLAVESVPSQQSADQDEMREK) is disordered.

It belongs to the UPF0677 family.

Exhibits S-adenosyl-L-methionine-dependent methyltransferase activity. The sequence is that of Putative S-adenosyl-L-methionine-dependent methyltransferase Mflv_5023 from Mycolicibacterium gilvum (strain PYR-GCK) (Mycobacterium gilvum (strain PYR-GCK)).